A 549-amino-acid polypeptide reads, in one-letter code: Glucose-6-phosphate isomerase (549 aa).

Catalysis depends on E355, which acts as the Proton donor. Catalysis depends on residues H386 and K514.

It belongs to the GPI family.

It localises to the cytoplasm. It carries out the reaction alpha-D-glucose 6-phosphate = beta-D-fructose 6-phosphate. The protein operates within carbohydrate biosynthesis; gluconeogenesis. It functions in the pathway carbohydrate degradation; glycolysis; D-glyceraldehyde 3-phosphate and glycerone phosphate from D-glucose: step 2/4. Its function is as follows. Catalyzes the reversible isomerization of glucose-6-phosphate to fructose-6-phosphate. This Salmonella choleraesuis (strain SC-B67) protein is Glucose-6-phosphate isomerase.